Reading from the N-terminus, the 394-residue chain is Elongation factor Tu 1 (394 aa).

The region spanning 10 to 204 (KPHVNVGTIG…YLDSYIPEPE (195 aa)) is the tr-type G domain. The tract at residues 19–26 (GHVDHGKT) is G1. 19–26 (GHVDHGKT) contacts GTP. Mg(2+) is bound at residue T26. Residues 60 to 64 (GITIN) are G2. A G3 region spans residues 81–84 (DCPG). GTP is bound by residues 81–85 (DCPGH) and 136–139 (NKCD). The segment at 136-139 (NKCD) is G4. The G5 stretch occupies residues 174 to 176 (SAL).

It belongs to the TRAFAC class translation factor GTPase superfamily. Classic translation factor GTPase family. EF-Tu/EF-1A subfamily. Monomer.

It is found in the cytoplasm. The enzyme catalyses GTP + H2O = GDP + phosphate + H(+). Functionally, GTP hydrolase that promotes the GTP-dependent binding of aminoacyl-tRNA to the A-site of ribosomes during protein biosynthesis. The protein is Elongation factor Tu 1 of Yersinia enterocolitica serotype O:8 / biotype 1B (strain NCTC 13174 / 8081).